The primary structure comprises 235 residues: Aspartate/glutamate leucyltransferase (235 aa).

It belongs to the R-transferase family. Bpt subfamily.

Its subcellular location is the cytoplasm. The enzyme catalyses N-terminal L-glutamyl-[protein] + L-leucyl-tRNA(Leu) = N-terminal L-leucyl-L-glutamyl-[protein] + tRNA(Leu) + H(+). It carries out the reaction N-terminal L-aspartyl-[protein] + L-leucyl-tRNA(Leu) = N-terminal L-leucyl-L-aspartyl-[protein] + tRNA(Leu) + H(+). In terms of biological role, functions in the N-end rule pathway of protein degradation where it conjugates Leu from its aminoacyl-tRNA to the N-termini of proteins containing an N-terminal aspartate or glutamate. This Pseudomonas fluorescens (strain Pf0-1) protein is Aspartate/glutamate leucyltransferase.